We begin with the raw amino-acid sequence, 678 residues long: Protein MALE DISCOVERER 2 (678 aa).

Positions 1-25 (MMGCGFHFPWFFFLIIGLQAPLSLS) are cleaved as a signal peptide. The Extracellular segment spans residues 26-323 (LTSQGSALLK…SKGSKHVWLY (298 aa)). A glycan (N-linked (GlcNAc...) asparagine) is linked at Asn52. LRR repeat units lie at residues 71-94 (KVQI…SQLS), 95-117 (DLRS…YGSF), 119-141 (NLEV…LSNG), and 143-164 (SLKH…KIVR). Positions 247–314 (LAAEPAPSAP…KNQPQDNKQS (68 aa)) are disordered. Over residues 296-311 (KGSTSPDISKNQPQDN) the composition is skewed to polar residues. The chain crosses the membrane as a helical span at residues 324–344 (VVIAVASFVGLLIIVAVIFFC). The Cytoplasmic segment spans residues 345–678 (RKRAVKSIGP…ELEILSSEAT (334 aa)). A Protein kinase domain is found at 346-651 (KRAVKSIGPW…DVAEQLKQVI (306 aa)).

The protein belongs to the protein kinase superfamily. Ser/Thr protein kinase family. As to expression, expressed in pollen tubes and seedlings.

Its subcellular location is the endomembrane system. It carries out the reaction L-seryl-[protein] + ATP = O-phospho-L-seryl-[protein] + ADP + H(+). The catalysed reaction is L-threonyl-[protein] + ATP = O-phospho-L-threonyl-[protein] + ADP + H(+). In terms of biological role, involved in the pollen tube perception of the female signal by binding an unidentified female attractant. May be involved in the regulation of root hairs development. The chain is Protein MALE DISCOVERER 2 (MDIS2) from Arabidopsis thaliana (Mouse-ear cress).